Here is a 462-residue protein sequence, read N- to C-terminus: ATP synthase subunit beta (462 aa).

ATP is bound at residue G152–T159.

The protein belongs to the ATPase alpha/beta chains family. As to quaternary structure, F-type ATPases have 2 components, CF(1) - the catalytic core - and CF(0) - the membrane proton channel. CF(1) has five subunits: alpha(3), beta(3), gamma(1), delta(1), epsilon(1). CF(0) has three main subunits: a(1), b(2) and c(9-12). The alpha and beta chains form an alternating ring which encloses part of the gamma chain. CF(1) is attached to CF(0) by a central stalk formed by the gamma and epsilon chains, while a peripheral stalk is formed by the delta and b chains.

It localises to the cell inner membrane. It carries out the reaction ATP + H2O + 4 H(+)(in) = ADP + phosphate + 5 H(+)(out). Produces ATP from ADP in the presence of a proton gradient across the membrane. The catalytic sites are hosted primarily by the beta subunits. This is ATP synthase subunit beta from Tolumonas auensis (strain DSM 9187 / NBRC 110442 / TA 4).